The following is a 1755-amino-acid chain: Transposon Ty1-DR5 Gag-Pol polyprotein (1755 aa).

Polar residues-rich tracts occupy residues 1–10 (MESQQLSNYP), 48–60 (TKAN…TPAS), and 127–152 (QSQF…GNTF). Disordered regions lie at residues 1-93 (MESQ…MMTQ), 126-173 (PQSQ…RPPP), and 352-421 (GSRN…SKST). The span at 153–165 (TDSSSADSDMTST) shows a compositional bias: low complexity. The tract at residues 299 to 401 (NNGIHINNKV…NSKSKTARAH (103 aa)) is RNA-binding. Over residues 402–418 (NVSTSNNSPSTDNDSIS) the composition is skewed to low complexity. The active-site For protease activity; shared with dimeric partner is the Asp-461. The integrase-type zinc finger-like stretch occupies residues 583–640 (NVHTSESTRKYPYPFIHRMLAHANAQTIRYSLKNNTITYFNESDVDWSSAIDYQCPDC). Positions 660 to 835 (NSYEPFQYLH…AGLDISTLLP (176 aa)) constitute an Integrase catalytic domain. Mg(2+)-binding residues include Asp-671 and Asp-736. 3 disordered regions span residues 956–1087 (SKAV…ETEK), 1092–1111 (RSPS…NIVP), and 1130–1187 (DLPL…DNET). The segment covering 960 to 969 (SPTDSTPPST) has biased composition (low complexity). Polar residues predominate over residues 1005–1015 (STPQISNIEST). The segment covering 1038–1053 (ESSHASKSKDFRHSDS) has biased composition (basic and acidic residues). 2 stretches are compositionally biased toward polar residues: residues 1054–1082 (YSEN…QISD) and 1101–1111 (PENNSSHNIVP). Positions 1178-1212 (KKRSLEDNETEIKVSRDTWNTKNMRSLEPPRSKKR) match the Bipartite nuclear localization signal motif. One can recognise a Reverse transcriptase Ty1/copia-type domain in the interval 1338–1476 (NNYYITQLDI…DILGLEIKYQ (139 aa)). Mg(2+) contacts are provided by Asp-1346, Asp-1427, Asp-1428, Asp-1610, Glu-1652, and Asp-1685. Positions 1610 to 1752 (DASYGNQPYY…IKTFKLLTNK (143 aa)) constitute an RNase H Ty1/copia-type domain.

In terms of assembly, the capsid protein forms a homotrimer, from which the VLPs are assembled. The protease is a homodimer, whose active site consists of two apposed aspartic acid residues. Post-translationally, initially, virus-like particles (VLPs) are composed of the structural unprocessed proteins Gag and Gag-Pol, and also contain the host initiator methionine tRNA (tRNA(i)-Met) which serves as a primer for minus-strand DNA synthesis, and a dimer of genomic Ty RNA. Processing of the polyproteins occurs within the particle and proceeds by an ordered pathway, called maturation. First, the protease (PR) is released by autocatalytic cleavage of the Gag-Pol polyprotein yielding capsid protein p45 and a Pol-p154 precursor protein. This cleavage is a prerequisite for subsequent processing of Pol-p154 at the remaining sites to release the mature structural and catalytic proteins. Maturation takes place prior to the RT reaction and is required to produce transposition-competent VLPs.

The protein localises to the cytoplasm. The protein resides in the nucleus. It catalyses the reaction DNA(n) + a 2'-deoxyribonucleoside 5'-triphosphate = DNA(n+1) + diphosphate. The enzyme catalyses Endonucleolytic cleavage to 5'-phosphomonoester.. In terms of biological role, capsid protein (CA) is the structural component of the virus-like particle (VLP), forming the shell that encapsulates the retrotransposons dimeric RNA genome. The particles are assembled from trimer-clustered units and there are holes in the capsid shells that allow for the diffusion of macromolecules. CA also has nucleocapsid-like chaperone activity, promoting primer tRNA(i)-Met annealing to the multipartite primer-binding site (PBS), dimerization of Ty1 RNA and initiation of reverse transcription. Functionally, the aspartyl protease (PR) mediates the proteolytic cleavages of the Gag and Gag-Pol polyproteins after assembly of the VLP. Its function is as follows. Reverse transcriptase/ribonuclease H (RT) is a multifunctional enzyme that catalyzes the conversion of the retro-elements RNA genome into dsDNA within the VLP. The enzyme displays a DNA polymerase activity that can copy either DNA or RNA templates, and a ribonuclease H (RNase H) activity that cleaves the RNA strand of RNA-DNA heteroduplexes during plus-strand synthesis and hydrolyzes RNA primers. The conversion leads to a linear dsDNA copy of the retrotransposon that includes long terminal repeats (LTRs) at both ends. Integrase (IN) targets the VLP to the nucleus, where a subparticle preintegration complex (PIC) containing at least integrase and the newly synthesized dsDNA copy of the retrotransposon must transit the nuclear membrane. Once in the nucleus, integrase performs the integration of the dsDNA into the host genome. In Saccharomyces cerevisiae (strain ATCC 204508 / S288c) (Baker's yeast), this protein is Transposon Ty1-DR5 Gag-Pol polyprotein (TY1B-DR5).